A 327-amino-acid polypeptide reads, in one-letter code: Thioredoxin reductase sirT (327 aa).

Residues 15–18, 37–42, His-50, and Ala-115 each bind FAD; these read AGPA and DTGVFR. Cys-139 and Cys-142 are joined by a disulfide. FAD-binding positions include Asp-289 and 296-297; that span reads QV.

Belongs to the class-II pyridine nucleotide-disulfide oxidoreductase family. In terms of assembly, homodimer. The cofactor is FAD.

It participates in mycotoxin biosynthesis. Thioredoxin reductase; part of the gene cluster that mediates the biosynthesis of sirodesmin PL, an epipolythiodioxopiperazine (ETP) characterized by a disulfide bridged cyclic dipeptide and that acts as a phytotoxin which is involved in the blackleg didease of canola. SirD catalyzes the O-prenylation of L-tyrosine (L-Tyr) in the presence of dimethylallyl diphosphate (DMAPP) to yield 4-O-dimethylallyl-L-Tyr, and therefore represents probably the first pathway-specific enzyme in the biosynthesis of sirodesmin PL. 4-O-dimethylallyl-L-Tyr, then undergoes condensation with L-Ser in a reaction catalyzed by the non-ribosomal peptide synthase sirP to form the diketopiperazine (DKP) backbone. Further bishydroxylation of the DKP performed by the cytochrome P450 monooxygenase sirC leads to the production of the intermediate phomamide. This step is essential to form the reactive thiol group required for toxicity of sirodesmin PL. The next steps of sirodesmin biosynthesis are not well understood yet, but some predictions could be made from intermediate compounds identification. Phomamide is converted into phomalizarine via oxidation, probably by sirT. Further oxidation, methylation (by sirM or sirN) and reduction steps convert phomalizarine to deacetyl sirodesmin. Finally, acetyltransferase sirH probably acetylates deacetyl sirodesmin to produce sirodesmin PL. The sequence is that of Thioredoxin reductase sirT from Leptosphaeria maculans (Blackleg fungus).